The chain runs to 244 residues: uncharacterized protein (244 aa).

An N-terminal signal peptide occupies residues 1–19; the sequence is MRGIFFLILILNFIGLIFS. N-linked (GlcNAc...) asparagine glycans are attached at residues asparagine 45 and asparagine 77. ShKT domains follow at residues 67–105 and 113–149; these read CNNP…CGKC and CSDK…CNRC. Cystine bridges form between cysteine 113-cysteine 149, cysteine 122-cysteine 142, and cysteine 129-cysteine 146. N-linked (GlcNAc...) asparagine glycans are attached at residues asparagine 152 and asparagine 158. 2 ShKT domains span residues 171-205 and 208-243; these read CTDL…CNAC and CEDA…CNIC. 6 cysteine pairs are disulfide-bonded: cysteine 171-cysteine 205, cysteine 178-cysteine 198, cysteine 185-cysteine 202, cysteine 208-cysteine 243, cysteine 215-cysteine 236, and cysteine 224-cysteine 240.

This is an uncharacterized protein from Caenorhabditis elegans.